The primary structure comprises 304 residues: Porphobilinogen deaminase (304 aa).

C241 is subject to S-(dipyrrolylmethanemethyl)cysteine.

This sequence belongs to the HMBS family. In terms of assembly, monomer. It depends on dipyrromethane as a cofactor.

The enzyme catalyses 4 porphobilinogen + H2O = hydroxymethylbilane + 4 NH4(+). It functions in the pathway porphyrin-containing compound metabolism; protoporphyrin-IX biosynthesis; coproporphyrinogen-III from 5-aminolevulinate: step 2/4. Tetrapolymerization of the monopyrrole PBG into the hydroxymethylbilane pre-uroporphyrinogen in several discrete steps. The protein is Porphobilinogen deaminase of Ruthia magnifica subsp. Calyptogena magnifica.